A 422-amino-acid chain; its full sequence is Killer cell immunoglobulin-like receptor 3DL1 (422 aa).

The N-terminal stretch at 1 to 21 (MMFEFLSLLCSGFFLVQRMSA) is a signal peptide. The Extracellular portion of the chain corresponds to 22–329 (HMGSYDKPFL…KNLHIQIGLL (308 aa)). 3 Ig-like C2-type domains span residues 42–100 (GQNV…HHQY), 135–202 (GENV…YNHS), and 237–300 (EQNM…FKNS). A glycan (N-linked (GlcNAc...) asparagine) is linked at N44. A disulfide bond links C49 and C95. An N-linked (GlcNAc...) asparagine glycan is attached at N137. The cysteines at positions 142 and 195 are disulfide-linked. N-linked (GlcNAc...) asparagine glycosylation is found at N200 and N239. Residues C244 and C293 are joined by a disulfide bond. Residue N299 is glycosylated (N-linked (GlcNAc...) asparagine). Residues 330 to 350 (VTMVLVIVVIIIIIIIIIIII) form a helical membrane-spanning segment. The Cytoplasmic portion of the chain corresponds to 351–422 (YYYYFSKKSS…DTVVYTEVMI (72 aa)).

It belongs to the immunoglobulin superfamily.

It is found in the cell membrane. Its function is as follows. Receptor on natural killer (NK) cells. Inhibits the activity of NK cells thus preventing cell lysis. This Rattus norvegicus (Rat) protein is Killer cell immunoglobulin-like receptor 3DL1 (Kir3dl1).